Here is a 306-residue protein sequence, read N- to C-terminus: Non-specific ribonucleoside hydrolase RihC (306 aa).

The active site involves His-235.

It belongs to the IUNH family. RihC subfamily.

Hydrolyzes both purine and pyrimidine ribonucleosides with a broad-substrate specificity. In Salmonella paratyphi C (strain RKS4594), this protein is Non-specific ribonucleoside hydrolase RihC.